A 686-amino-acid chain; its full sequence is Methionine--tRNA ligase (686 aa).

Positions 22–32 (PYANGPIHLGH) match the 'HIGH' region motif. Zn(2+) contacts are provided by Cys-153, Cys-156, Cys-166, and Cys-169. The 'KMSKS' region signature appears at 337–341 (KMSKS). ATP is bound at residue Lys-340. A disordered region spans residues 547 to 573 (MLEDSKESTPAPAAAKPKKAATQKADA). Residues 584–686 (DFLKVKLRVA…SGAEPGMEVR (103 aa)) enclose the tRNA-binding domain.

The protein belongs to the class-I aminoacyl-tRNA synthetase family. MetG type 1 subfamily. Homodimer. Zn(2+) is required as a cofactor.

The protein resides in the cytoplasm. It carries out the reaction tRNA(Met) + L-methionine + ATP = L-methionyl-tRNA(Met) + AMP + diphosphate. Its function is as follows. Is required not only for elongation of protein synthesis but also for the initiation of all mRNA translation through initiator tRNA(fMet) aminoacylation. The chain is Methionine--tRNA ligase from Alcanivorax borkumensis (strain ATCC 700651 / DSM 11573 / NCIMB 13689 / SK2).